The following is a 286-amino-acid chain: MKLAVYGKGGIGKSTTSCNISVALARRGKKVLQIGCDPKHDSTFTLTGFLIPTIIDTLQSKDYHYENVWPEDVIYKGYGGVDCVEAGGPPAGAGCGGYVVGETVKLLKELNAFDEYDVILFDVLGDVVCGGFAAPLNYADYCLIVTDNGFDALFAANRIAASVREKARTHVLRLAGLIGNRTAKRDLIDKYVEAVPMPVLEILPLIEDIRVSRVKGKTLFEMAESDPSLNYVCDYYLNIADQILARPEGVVPQGAPDRDLFALLSDFYLNPAPNKVEQEDLELMMV.

ATP contacts are provided by residues 10–15 and Lys39; that span reads GIGKST. Ser14 serves as a coordination point for Mg(2+). [4Fe-4S] cluster is bound by residues Cys95 and Cys129. Residue 180–181 participates in ATP binding; the sequence is NR.

This sequence belongs to the NifH/BchL/ChlL family. Homodimer. Protochlorophyllide reductase is composed of three subunits; ChlL, ChlN and ChlB. It depends on [4Fe-4S] cluster as a cofactor.

The enzyme catalyses chlorophyllide a + oxidized 2[4Fe-4S]-[ferredoxin] + 2 ADP + 2 phosphate = protochlorophyllide a + reduced 2[4Fe-4S]-[ferredoxin] + 2 ATP + 2 H2O. The protein operates within porphyrin-containing compound metabolism; chlorophyll biosynthesis (light-independent). Its function is as follows. Component of the dark-operative protochlorophyllide reductase (DPOR) that uses Mg-ATP and reduced ferredoxin to reduce ring D of protochlorophyllide (Pchlide) to form chlorophyllide a (Chlide). This reaction is light-independent. The L component serves as a unique electron donor to the NB-component of the complex, and binds Mg-ATP. The protein is Light-independent protochlorophyllide reductase iron-sulfur ATP-binding protein of Cyanothece sp. (strain PCC 7425 / ATCC 29141).